Reading from the N-terminus, the 401-residue chain is Probable sodium/metabolite cotransporter BASS5, chloroplastic (401 aa).

Residues 1-46 constitute a chloroplast transit peptide; it reads MAPNAAVLVRPHIAGVHHLPTGRRLPRLAPPQAVSPPFSRQKGSVV. 9 consecutive transmembrane segments (helical) span residues 93 to 113, 122 to 142, 159 to 179, 185 to 205, 215 to 235, 247 to 267, 273 to 293, 299 to 319, and 372 to 392; these read TIIPHVVLGSTILALVYPPSF, APALGFLMFAVGVNSSVKDFI, FIIKPFLGFLFGTLAVTIFNL, AGIMLVSCVSGAQLSNYATFL, IVMTSLSTATAVFVTPTLSYF, GMMSSIVQIVVAPIAAGLLLN, LCSAIQPFLPPLSVFVTALCV, INIKAVLSPFGLATVLLLFAF, and LVGVPPAISVVLMSLMGFALV.

This sequence belongs to the bile acid:sodium symporter (BASS) (TC 2.A.28) family.

Its subcellular location is the membrane. The protein localises to the plastid. It localises to the chloroplast envelope. Functionally, may function as sodium-coupled metabolite transporter across the chloroplast envelope. This is Probable sodium/metabolite cotransporter BASS5, chloroplastic (BASS5) from Oryza sativa subsp. indica (Rice).